A 348-amino-acid polypeptide reads, in one-letter code: Fasciculation and elongation protein zeta-2 (348 aa).

The disordered stretch occupies residues Tyr11–Gly40. Ser130, Ser171, and Ser190 each carry phosphoserine. Residues Glu206–Ser280 are a coiled coil. The segment at Gln265–Thr296 is disordered.

Belongs to the zygin family. In terms of assembly, homodimer; disulfide-linked. May form heterodimers with FEZ1. Interacts with synaptotagmin.

Involved in axonal outgrowth and fasciculation. This Mus musculus (Mouse) protein is Fasciculation and elongation protein zeta-2 (Fez2).